Here is a 118-residue protein sequence, read N- to C-terminus: V-type proton ATPase subunit G 1 (118 aa).

The residue at position 2 (Ala-2) is an N-acetylalanine.

Belongs to the V-ATPase G subunit family. V-ATPase is a heteromultimeric enzyme made up of two complexes: the ATP-hydrolytic V1 complex and the proton translocation V0 complex. The V1 complex consists of three catalytic AB heterodimers that form a heterohexamer, three peripheral stalks each consisting of EG heterodimers, one central rotor including subunits D and F, and the regulatory subunits C and H. The proton translocation complex V0 consists of the proton transport subunit a, a ring of proteolipid subunits c9c'', rotary subunit d, subunits e and f, and the accessory subunits ATP6AP1/Ac45 and ATP6AP2/PRR. Kidney; localizes to early distal nephron, encompassing thick ascending limbs and distal convoluted tubules (at protein level). Ubiquitous.

The protein resides in the apical cell membrane. In terms of biological role, subunit of the V1 complex of vacuolar(H+)-ATPase (V-ATPase), a multisubunit enzyme composed of a peripheral complex (V1) that hydrolyzes ATP and a membrane integral complex (V0) that translocates protons. V-ATPase is responsible for acidifying and maintaining the pH of intracellular compartments and in some cell types, is targeted to the plasma membrane, where it is responsible for acidifying the extracellular environment. In aerobic conditions, involved in intracellular iron homeostasis, thus triggering the activity of Fe(2+) prolyl hydroxylase (PHD) enzymes, and leading to HIF1A hydroxylation and subsequent proteasomal degradation. This Homo sapiens (Human) protein is V-type proton ATPase subunit G 1 (ATP6V1G1).